The sequence spans 513 residues: ATP synthase subunit alpha (513 aa).

169–176 contributes to the ATP binding site; it reads GDRQTGKT.

Belongs to the ATPase alpha/beta chains family. As to quaternary structure, F-type ATPases have 2 components, CF(1) - the catalytic core - and CF(0) - the membrane proton channel. CF(1) has five subunits: alpha(3), beta(3), gamma(1), delta(1), epsilon(1). CF(0) has three main subunits: a(1), b(2) and c(9-12). The alpha and beta chains form an alternating ring which encloses part of the gamma chain. CF(1) is attached to CF(0) by a central stalk formed by the gamma and epsilon chains, while a peripheral stalk is formed by the delta and b chains.

Its subcellular location is the cell inner membrane. It carries out the reaction ATP + H2O + 4 H(+)(in) = ADP + phosphate + 5 H(+)(out). Functionally, produces ATP from ADP in the presence of a proton gradient across the membrane. The alpha chain is a regulatory subunit. The polypeptide is ATP synthase subunit alpha (Bordetella pertussis (strain Tohama I / ATCC BAA-589 / NCTC 13251)).